The primary structure comprises 244 residues: 3-deoxy-manno-octulosonate cytidylyltransferase (244 aa).

It belongs to the KdsB family.

The protein resides in the cytoplasm. It catalyses the reaction 3-deoxy-alpha-D-manno-oct-2-ulosonate + CTP = CMP-3-deoxy-beta-D-manno-octulosonate + diphosphate. Its pathway is nucleotide-sugar biosynthesis; CMP-3-deoxy-D-manno-octulosonate biosynthesis; CMP-3-deoxy-D-manno-octulosonate from 3-deoxy-D-manno-octulosonate and CTP: step 1/1. It participates in bacterial outer membrane biogenesis; lipopolysaccharide biosynthesis. Functionally, activates KDO (a required 8-carbon sugar) for incorporation into bacterial lipopolysaccharide in Gram-negative bacteria. The chain is 3-deoxy-manno-octulosonate cytidylyltransferase from Rickettsia bellii (strain OSU 85-389).